The following is a 184-amino-acid chain: dCTP deaminase (184 aa).

DCTP is bound by residues 107-112 (KSTYAR), 131-133 (TLE), Q152, Y166, and Q176. E133 serves as the catalytic Proton donor/acceptor.

It belongs to the dCTP deaminase family. As to quaternary structure, homotrimer.

The enzyme catalyses dCTP + H2O + H(+) = dUTP + NH4(+). It functions in the pathway pyrimidine metabolism; dUMP biosynthesis; dUMP from dCTP (dUTP route): step 1/2. Catalyzes the deamination of dCTP to dUTP. This Gemmatimonas aurantiaca (strain DSM 14586 / JCM 11422 / NBRC 100505 / T-27) protein is dCTP deaminase.